The primary structure comprises 721 residues: Putative cullin-like protein 1 (721 aa).

The region spanning 651 to 713 (DRRYAIDAAL…RDYLERDTEN (63 aa)) is the Cullin neddylation domain.

This sequence belongs to the cullin family.

This chain is Putative cullin-like protein 1, found in Arabidopsis thaliana (Mouse-ear cress).